Consider the following 404-residue polypeptide: Cytochrome b561 and DOMON domain-containing protein At5g35735 (404 aa).

The signal sequence occupies residues methionine 1–glycine 25. The DOMON domain occupies leucine 49–glycine 164. Residues valine 170 to leucine 369 form the Cytochrome b561 domain. Residues alanine 172 to lysine 207 form a disordered region. Polar residues predominate over residues serine 173 to serine 183. A run of 2 helical transmembrane segments spans residues threonine 210 to alanine 230 and tryptophan 241 to alanine 261. The heme b site is built by histidine 211, histidine 245, and histidine 278. The chain crosses the membrane as a helical span at residues asparagine 280 to proline 300. Residue histidine 314 coordinates heme b. Transmembrane regions (helical) follow at residues threonine 316–leucine 336 and isoleucine 349–leucine 369. Residues glycine 376–alanine 404 are disordered. A compositionally biased stretch (polar residues) spans alanine 380–alanine 404.

The cofactor is heme b.

Its subcellular location is the membrane. Its function is as follows. May act as a catecholamine-responsive trans-membrane electron transporter. The protein is Cytochrome b561 and DOMON domain-containing protein At5g35735 of Arabidopsis thaliana (Mouse-ear cress).